We begin with the raw amino-acid sequence, 90 residues long: Small ribosomal subunit protein bS16 (90 aa).

This sequence belongs to the bacterial ribosomal protein bS16 family.

The sequence is that of Small ribosomal subunit protein bS16 from Oceanobacillus iheyensis (strain DSM 14371 / CIP 107618 / JCM 11309 / KCTC 3954 / HTE831).